A 91-amino-acid polypeptide reads, in one-letter code: DNA-directed RNA polymerase subunit omega (91 aa).

Belongs to the RNA polymerase subunit omega family. In terms of assembly, the RNAP catalytic core consists of 2 alpha, 1 beta, 1 beta' and 1 omega subunit. When a sigma factor is associated with the core the holoenzyme is formed, which can initiate transcription.

The enzyme catalyses RNA(n) + a ribonucleoside 5'-triphosphate = RNA(n+1) + diphosphate. Promotes RNA polymerase assembly. Latches the N- and C-terminal regions of the beta' subunit thereby facilitating its interaction with the beta and alpha subunits. This chain is DNA-directed RNA polymerase subunit omega, found in Edwardsiella ictaluri (strain 93-146).